A 402-amino-acid polypeptide reads, in one-letter code: MSKVKKVVLAYSGGLDTSAIIPWLKETYDDCEIIAFCADVGQGAEELVGLEEKALASGASECHIVDLKEEFVKDYIYPTMASGAVYEGTYLLGTAMARPIIAKAQVEVALKVGADALCHGCTGKGNDQIRFESCFAALAPELQVIAPWREWEMESREDLLDYLAERNIETTASATKIYSRDANAWHISHEGGELENPWNAPSKGVWTLTVDPEDAPDKPEYLTIKVENARVVAVDGVELSPYDALMLLNEKAAAHGVGRVDITENRTVGMKSRGCYETPGGTVMVAALRGIDELVHDKPARKWRDQVGQEFTHLVYDGRWFTPLCGSLLAASEALAKDVNGEVVVKMYKGQVTAEQKRSPNSLYSEEFATFGDDNVYNQKHAEGFIRLYSLSSRIRTLNSKK.

Residues 10-18 (AYSGGLDTS) and Ala38 each bind ATP. Tyr90 provides a ligand contact to L-citrulline. Position 120 (Gly120) interacts with ATP. L-aspartate is bound by residues Thr122, Asn126, and Asp127. Asn126 provides a ligand contact to L-citrulline. 5 residues coordinate L-citrulline: Arg130, Ser179, Ser188, Glu264, and Tyr276.

The protein belongs to the argininosuccinate synthase family. Type 1 subfamily. In terms of assembly, homotetramer.

It is found in the cytoplasm. It catalyses the reaction L-citrulline + L-aspartate + ATP = 2-(N(omega)-L-arginino)succinate + AMP + diphosphate + H(+). It functions in the pathway amino-acid biosynthesis; L-arginine biosynthesis; L-arginine from L-ornithine and carbamoyl phosphate: step 2/3. The polypeptide is Argininosuccinate synthase (Psychromonas ingrahamii (strain DSM 17664 / CCUG 51855 / 37)).